Here is a 445-residue protein sequence, read N- to C-terminus: rRNA methyltransferase 3B, mitochondrial (445 aa).

The N-terminal 37 residues, 1–37 (MATRIASMRFRCALFQSALTLGRNEVNIKRYVRRRRA), are a transit peptide targeting the mitochondrion. 2 disordered regions span residues 52–90 (EGVI…SQPV) and 311–334 (HSTT…SDYG). Composition is skewed to polar residues over residues 54-70 (VISQ…NDIT), 78-90 (IENP…SQPV), and 311-324 (HSTT…NTTP). 3 residues coordinate S-adenosyl-L-methionine: glycine 387, isoleucine 411, and leucine 420.

Belongs to the class IV-like SAM-binding methyltransferase superfamily. RNA methyltransferase TrmH family.

Its subcellular location is the mitochondrion. It carries out the reaction a uridine in rRNA + S-adenosyl-L-methionine = a 2'-O-methyluridine in rRNA + S-adenosyl-L-homocysteine + H(+). In terms of biological role, S-adenosyl-L-methionine-dependent 2'-O-ribose methyltransferase that catalyzes the formation of 2'-O-methylguanosine at position 1485 (Gm1485) in the mitochondrial large subunit ribosomal RNA (mtLSU rRNA), a conserved modification in the peptidyl transferase domain of the mtLSU rRNA. Also required for formation of 2'-O-methyluridine at position 1484 (Um1484) mediated by MRM2. This Danio rerio (Zebrafish) protein is rRNA methyltransferase 3B, mitochondrial.